The following is a 396-amino-acid chain: Elongation factor Tu (396 aa).

A tr-type G domain is found at 10-205 (KPHVNIGTIG…ACDDSIPDPE (196 aa)). The G1 stretch occupies residues 19–26 (GHVDHGKT). Residue 19–26 (GHVDHGKT) participates in GTP binding. Thr26 contributes to the Mg(2+) binding site. The segment at 62 to 66 (GITIN) is G2. The tract at residues 83–86 (DAPG) is G3. Residues 83-87 (DAPGH) and 138-141 (NKCD) contribute to the GTP site. Residues 138-141 (NKCD) form a G4 region. Residues 175–177 (SAL) are G5.

This sequence belongs to the TRAFAC class translation factor GTPase superfamily. Classic translation factor GTPase family. EF-Tu/EF-1A subfamily. In terms of assembly, monomer.

The protein localises to the cytoplasm. The catalysed reaction is GTP + H2O = GDP + phosphate + H(+). Functionally, GTP hydrolase that promotes the GTP-dependent binding of aminoacyl-tRNA to the A-site of ribosomes during protein biosynthesis. In Corynebacterium aurimucosum (strain ATCC 700975 / DSM 44827 / CIP 107346 / CN-1) (Corynebacterium nigricans), this protein is Elongation factor Tu.